Here is a 247-residue protein sequence, read N- to C-terminus: Large ribosomal subunit protein uL30 (247 aa).

Met1 is subject to N-acetylmethionine. 4 repeat units span residues 7–17 (KKKVPAVPETL), 18–29 (KKKRRNFAELKI), 30–41 (KRLRKKFAQKML), and 42–53 (RKARRKLIYEKA). Residues 7–53 (KKKVPAVPETLKKKRRNFAELKIKRLRKKFAQKMLRKARRKLIYEKA) are 4 X 12 AA tandem repeats. A Phosphothreonine modification is found at Thr16. The residue at position 123 (Lys123) is an N6-acetyllysine. The residue at position 126 (Lys126) is an N6-succinyllysine. Residue Tyr138 is modified to Phosphotyrosine.

The protein belongs to the universal ribosomal protein uL30 family. Component of the large ribosomal subunit. Homodimer. Interacts with DHX33.

The protein resides in the cytoplasm. In terms of biological role, component of the large ribosomal subunit. The ribosome is a large ribonucleoprotein complex responsible for the synthesis of proteins in the cell. Binds to G-rich structures in 28S rRNA and in mRNAs. Plays a regulatory role in the translation apparatus; inhibits cell-free translation of mRNAs. The protein is Large ribosomal subunit protein uL30 (RPL7) of Pongo abelii (Sumatran orangutan).